Reading from the N-terminus, the 908-residue chain is DNA (cytosine-5)-methyltransferase 3A (908 aa).

The segment covering 1 to 13 has biased composition (low complexity); it reads MPSSGPGDTSSSS. 2 disordered regions span residues 1–183 and 226–281; these read MPSS…PMPR and NQAS…PEYE. The segment covering 14–37 has biased composition (basic and acidic residues); the sequence is LEREDDRKEGEEQEENRGKEERQE. Positions 44-54 are enriched in basic residues; the sequence is KVGRPGRKRKH. Residues 69 to 80 are compositionally biased toward polar residues; it reads TTKSQPMAQDSG. S102 carries the phosphoserine modification. Over residues 110 to 124 the composition is skewed to low complexity; that stretch reads GAPAEGEGTETPPEA. T120 carries the phosphothreonine modification. K158 is covalently cross-linked (Glycyl lysine isopeptide (Lys-Gly) (interchain with G-Cter in SUMO2)). R167 is subject to Omega-N-methylarginine. The tract at residues 195-399 is interaction with DNMT1 and DNMT3B; the sequence is SKRKRDEWLA…DSGKAVEVQN (205 aa). Residues S239 and S251 each carry the phosphoserine modification. Polar residues predominate over residues 242–256; sequence AVQQPTDPASPTVAT. T257 carries the phosphothreonine modification. Over residues 265–275 the composition is skewed to basic and acidic residues; that stretch reads AGDKNATKAAD. Positions 288–346 constitute a PWWP domain; it reads IGELVWGKLRGFSWWPGRIVSWWMTGRSRAAEGTRWVMWFGDGKFSVVCVEKLMPLSSF. 2 positions are modified to phosphoserine: S386 and S389. Residues 443 to 462 are disordered; the sequence is AYAPPPPAKKPRKSTTEKPK. The ADD domain maps to 478–610; it reads EVRQKCRNIE…LQMFFANNHD (133 aa). Residues 489 to 519 form a GATA-type; atypical zinc finger; that stretch reads ICISCGSLNVTLEHPLFIGGMCQNCKNCFLE. Residues 490 to 582 form an interaction with the PRC2/EED-EZH2 complex region; sequence CISCGSLNVT…KEDPWNCYMC (93 aa). A PHD-type; atypical zinc finger spans residues 530-586; that stretch reads QSYCTICCGGREVLMCGNNNCCRCFCVECVDLLVGPGAAQAAIKEDPWNCYMCGHKG. One can recognise an SAM-dependent MTase C5-type domain in the interval 630 to 908; the sequence is IRVLSLFDGI…APLKEYFACV (279 aa). S-adenosyl-L-methionine contacts are provided by residues 637–641, E660, and 682–684; these read DGIAT and DVR. C706 is an active-site residue. C706 is subject to S-methylcysteine; by autocatalysis. 887 to 889 is an S-adenosyl-L-methionine binding site; sequence RSW.

The protein belongs to the class I-like SAM-binding methyltransferase superfamily. C5-methyltransferase family. Heterotetramer composed of 1 DNMT3A homodimer and 2 DNMT3L subunits (DNMT3L-DNMT3A-DNMT3A-DNMT3L). Interacts with DNMT1 and DNMT3B. Interacts with MPHOSPH8. Interacts with histone H3 that is not methylated at 'Lys-4' (H3K4). Binds the ZBTB18 transcriptional repressor. Interacts with SETDB1. Associates with HDAC1 through its ADD domain. Interacts with UHRF1. Interacts with the PRC2/EED-EZH2 complex. Interacts with UBC9, PIAS1 and PIAS2. Interacts with SPOCD1. Interacts with ZNF263; recruited to the SIX3 promoter along with other proteins involved in chromatin modification and transcriptional corepression where it contributes to transcriptional repression. Post-translationally, auto-methylated at Cys-706: auto-methylation takes place in absence of DNA substrate and inactivates the DNA methyltransferase activity. Inactivation by auto-methylation may be used to inactivate unused DNA methyltransferases in the cell. In terms of processing, sumoylated; sumoylation disrupts the ability to interact with histone deacetylases (HDAC1 and HDAC2) and repress transcription. Isoform 1 is expressed ubiquitously at low levels. Expression of isoform 2 is restricted to tissues containing cells which are undergoing active de novo methylation, including spleen, testis and thymus.

Its subcellular location is the nucleus. It localises to the chromosome. The protein localises to the cytoplasm. The enzyme catalyses a 2'-deoxycytidine in DNA + S-adenosyl-L-methionine = a 5-methyl-2'-deoxycytidine in DNA + S-adenosyl-L-homocysteine + H(+). It carries out the reaction L-cysteinyl-[protein] + S-adenosyl-L-methionine = S-methyl-L-cysteinyl-[protein] + S-adenosyl-L-homocysteine + H(+). Activated by binding to the regulatory factor DNMT3L. Auto-methylation at Cys-706 in absence of DNA inactivates the DNA methyltransferase activity. Required for genome-wide de novo methylation and is essential for the establishment of DNA methylation patterns during development. DNA methylation is coordinated with methylation of histones. It modifies DNA in a non-processive manner and also methylates non-CpG sites. May preferentially methylate DNA linker between 2 nucleosomal cores and is inhibited by histone H1. Plays a role in paternal and maternal imprinting. Required for methylation of most imprinted loci in germ cells. Acts as a transcriptional corepressor for ZBTB18. Recruited to trimethylated 'Lys-36' of histone H3 (H3K36me3) sites. Can actively repress transcription through the recruitment of HDAC activity. Also has weak auto-methylation activity on Cys-706 in absence of DNA. This chain is DNA (cytosine-5)-methyltransferase 3A, found in Mus musculus (Mouse).